The primary structure comprises 330 residues: Cyclin N-terminal domain-containing protein 1 (330 aa).

In terms of domain architecture, Cyclin N-terminal spans 27 to 178 (DALLHLAQQN…VLKSLNFRIN (152 aa)).

In terms of assembly, interacts with PRR19; this interaction promotes crossover formation. Interacts with RFC3 and RFC4; these interactions facilitate crossover formation. Interacts with CDC34; this interaction regulates the cell-cycle progression.

It localises to the nucleus. It is found in the cytoplasm. Its subcellular location is the chromosome. Plays a role in the different steps of crossover formation during meiotic recombination. Participates in the crossover differentiation step of crossover-specific recombination intermediates through its interaction with PRR19. In addition, stimulates crossover formation through the interactions with RFC3 and RFC4 and simultaneously regulates cell-cycle progression through interactions with CDC34 and subsequent ubiquitination of WEE1. May also participates in an active deselection process that destabilizes or removes excess pre-CO intermediates. The polypeptide is Cyclin N-terminal domain-containing protein 1 (Homo sapiens (Human)).